The following is a 517-amino-acid chain: RNA-binding region-containing protein 3 (517 aa).

Residues 1–26 (MAAPEQPLAISRGCTSSSSLSPPRGD) form a disordered region. Phosphoserine is present on S21. Positions 27 to 102 (RTLLVRHLPA…HTLVVEFAKE (76 aa)) constitute an RRM 1 domain. 2 disordered regions span residues 106-130 (VHSPCPTSGSEKKKRSDDPVEDDKE) and 213-254 (MPLH…DEDR). Position 108 is a phosphoserine (S108). The span at 115 to 130 (SEKKKRSDDPVEDDKE) shows a compositional bias: basic and acidic residues. Pro residues predominate over residues 217–230 (APLPPTSPQPPEEP). The span at 231-252 (PLPEEDEELSSEESEYESTDDE) shows a compositional bias: acidic residues. An RRM 2 domain is found at 420–503 (CRIYVKNLAK…KPMVVQFARS (84 aa)).

In terms of assembly, component of the U11/U12 snRNPs that are part of the U12-type spliceosome. Found in a complex with m(7)G-capped U12 snRNA. Interacts with PDCD7.

The protein localises to the nucleus. Functionally, participates in pre-mRNA U12-dependent splicing, performed by the minor spliceosome which removes U12-type introns. U12-type introns comprises less than 1% of all non-coding sequences. Binds to the 3'-stem-loop of m(7)G-capped U12 snRNA. This Pongo abelii (Sumatran orangutan) protein is RNA-binding region-containing protein 3 (RNPC3).